Consider the following 558-residue polypeptide: CTP synthase (558 aa).

The amidoligase domain stretch occupies residues 1–266 (MSAKYIFVTG…DRLVMKYLRL (266 aa)). CTP is bound at residue serine 14. A UTP-binding site is contributed by serine 14. Residues 15 to 20 (SLGKGL) and aspartate 72 contribute to the ATP site. Aspartate 72 and glutamate 140 together coordinate Mg(2+). Residues 147–149 (DIE), 187–192 (KTKPTQ), and lysine 223 contribute to the CTP site. Residues 187–192 (KTKPTQ) and lysine 223 contribute to the UTP site. 239-241 (KDV) is a binding site for ATP. A Glutamine amidotransferase type-1 domain is found at 291–537 (IIGIIGKYVE…IGASYEHRMK (247 aa)). Glycine 355 serves as a coordination point for L-glutamine. The active-site Nucleophile; for glutamine hydrolysis is cysteine 382. L-glutamine-binding positions include 383–386 (LGMQ), glutamate 406, and arginine 463. Residues histidine 510 and glutamate 512 contribute to the active site. Positions 539-558 (THTKEREEESVFLRPERVGK) are disordered. Positions 542 to 558 (KEREEESVFLRPERVGK) are enriched in basic and acidic residues.

This sequence belongs to the CTP synthase family. In terms of assembly, homotetramer.

The catalysed reaction is UTP + L-glutamine + ATP + H2O = CTP + L-glutamate + ADP + phosphate + 2 H(+). The enzyme catalyses L-glutamine + H2O = L-glutamate + NH4(+). It catalyses the reaction UTP + NH4(+) + ATP = CTP + ADP + phosphate + 2 H(+). The protein operates within pyrimidine metabolism; CTP biosynthesis via de novo pathway; CTP from UDP: step 2/2. Allosterically activated by GTP, when glutamine is the substrate; GTP has no effect on the reaction when ammonia is the substrate. The allosteric effector GTP functions by stabilizing the protein conformation that binds the tetrahedral intermediate(s) formed during glutamine hydrolysis. Inhibited by the product CTP, via allosteric rather than competitive inhibition. Functionally, catalyzes the ATP-dependent amination of UTP to CTP with either L-glutamine or ammonia as the source of nitrogen. Regulates intracellular CTP levels through interactions with the four ribonucleotide triphosphates. This Koribacter versatilis (strain Ellin345) protein is CTP synthase.